A 150-amino-acid polypeptide reads, in one-letter code: Macrodomain Ter protein (150 aa).

This sequence belongs to the MatP family. Homodimer.

Its subcellular location is the cytoplasm. Functionally, required for spatial organization of the terminus region of the chromosome (Ter macrodomain) during the cell cycle. Prevents early segregation of duplicated Ter macrodomains during cell division. Binds specifically to matS, which is a 13 bp signature motif repeated within the Ter macrodomain. In Erwinia tasmaniensis (strain DSM 17950 / CFBP 7177 / CIP 109463 / NCPPB 4357 / Et1/99), this protein is Macrodomain Ter protein.